The chain runs to 446 residues: Maltoporin (446 aa).

An N-terminal signal peptide occupies residues 1 to 25 (MMITLRKLPLAVAVAAGVMSAQAMA).

The protein belongs to the porin LamB (TC 1.B.3) family. As to quaternary structure, homotrimer formed of three 18-stranded antiparallel beta-barrels, containing three independent channels.

It is found in the cell outer membrane. It carries out the reaction beta-maltose(in) = beta-maltose(out). Its function is as follows. Involved in the transport of maltose and maltodextrins. The protein is Maltoporin of Escherichia coli O6:K15:H31 (strain 536 / UPEC).